The chain runs to 294 residues: Mimecan (294 aa).

Residues 1–19 (MKTLQAAFFLVAFVPLVKP) form the signal peptide. Asparagine 61 carries an N-linked (GlcNAc...) asparagine glycan. LRR repeat units lie at residues 108–127 (EAVPPLPKETAYLYARFNKI), 128–151 (KRIAVSDFADITTLRRIDFSGNMI), 152–175 (EEIEDGAFSKLLLLEELSLAENRL), 176–195 (VKLPVLPPKLTTFNANQNRI), 196–221 (KSRGIKNNAFKKLTNLAYLYLGHNAL), 222–242 (ESVPLNLPESLRILHLQHNNI), and 243–273 (TTINDDTFCKSNNTRYIRTRMDEIRMEGNPI). 2 N-linked (GlcNAc...) asparagine glycosylation sites follow: asparagine 241 and asparagine 254. Cysteine 251 and cysteine 284 form a disulfide bridge.

It belongs to the small leucine-rich proteoglycan (SLRP) family. SLRP class III subfamily. Post-translationally, the composition of the N-linked chains or the substitution of the N-linked sites is different between embryonic and adult tissues. In terms of processing, contains keratan sulfate.

It localises to the secreted. Its subcellular location is the extracellular space. The protein resides in the extracellular matrix. Functionally, induces bone formation in conjunction with TGF-beta-1 or TGF-beta-2. In Gallus gallus (Chicken), this protein is Mimecan (OGN).